A 185-amino-acid chain; its full sequence is uncharacterized protein (185 aa).

The signal sequence occupies residues 1–29; that stretch reads MKNQEIIEVKSKMFLRIWAFVGSAGMGLA. The N-palmitoyl cysteine moiety is linked to residue cysteine 30. Residue cysteine 30 is the site of S-diacylglycerol cysteine attachment. The chain crosses the membrane as a helical span at residues 45–67; the sequence is YLLAIPAGFLFTLFCLYLFIIFF.

The protein to B.subtilis YfjE.

Its subcellular location is the cell membrane. This is an uncharacterized protein from Bacillus subtilis (strain 168).